The following is a 148-amino-acid chain: C-C motif chemokine 2 (148 aa).

The signal sequence occupies residues 1–23; it reads MQVPVMLLGLLFTVAGWSIHVLA. Pyrrolidone carboxylic acid is present on Gln-24. 2 disulfides stabilise this stretch: Cys-34–Cys-59 and Cys-35–Cys-75. A glycan (N-linked (GlcNAc...) asparagine) is linked at Asn-126.

This sequence belongs to the intercrine beta (chemokine CC) family. In terms of assembly, monomer or homodimer; in equilibrium. Is tethered on endothelial cells by glycosaminoglycan (GAG) side chains of proteoglycans. Interacts with TNFAIP6 (via Link domain). Processing at the N-terminus can regulate receptor and target cell selectivity. Deletion of the N-terminal residue converts it from an activator of basophil to an eosinophil chemoattractant. Post-translationally, N-Glycosylated.

The protein resides in the secreted. Acts as a ligand for C-C chemokine receptor CCR2. Signals through binding and activation of CCR2 and induces a strong chemotactic response and mobilization of intracellular calcium ions. Exhibits a chemotactic activity for monocytes and basophils but not neutrophils or eosinophils. Plays an important role in mediating peripheral nerve injury-induced neuropathic pain. Increases NMDA-mediated synaptic transmission in both dopamine D1 and D2 receptor-containing neurons, which may be caused by MAPK/ERK-dependent phosphorylation of GRIN2B/NMDAR2B. The polypeptide is C-C motif chemokine 2 (Ccl2) (Mus musculus (Mouse)).